A 491-amino-acid chain; its full sequence is Ketol-acid reductoisomerase (NADP(+)) (491 aa).

In terms of domain architecture, KARI N-terminal Rossmann spans 15-208; that stretch reads AQLGKCRFMG…GGHRAGVLES (194 aa). NADP(+) contacts are provided by residues 45 to 48, Arg68, Arg76, Ser78, and 108 to 110; these read CGAQ and DKQ. His132 is a catalytic residue. NADP(+) is bound at residue Gly158. KARI C-terminal knotted domains are found at residues 209–344 and 345–484; these read SFVA…TAPQ and YEGK…MTDM. Positions 217, 221, 389, and 393 each coordinate Mg(2+). Ser414 is a substrate binding site.

Belongs to the ketol-acid reductoisomerase family. It depends on Mg(2+) as a cofactor.

It carries out the reaction (2R)-2,3-dihydroxy-3-methylbutanoate + NADP(+) = (2S)-2-acetolactate + NADPH + H(+). The enzyme catalyses (2R,3R)-2,3-dihydroxy-3-methylpentanoate + NADP(+) = (S)-2-ethyl-2-hydroxy-3-oxobutanoate + NADPH + H(+). It functions in the pathway amino-acid biosynthesis; L-isoleucine biosynthesis; L-isoleucine from 2-oxobutanoate: step 2/4. The protein operates within amino-acid biosynthesis; L-valine biosynthesis; L-valine from pyruvate: step 2/4. In terms of biological role, involved in the biosynthesis of branched-chain amino acids (BCAA). Catalyzes an alkyl-migration followed by a ketol-acid reduction of (S)-2-acetolactate (S2AL) to yield (R)-2,3-dihydroxy-isovalerate. In the isomerase reaction, S2AL is rearranged via a Mg-dependent methyl migration to produce 3-hydroxy-3-methyl-2-ketobutyrate (HMKB). In the reductase reaction, this 2-ketoacid undergoes a metal-dependent reduction by NADPH to yield (R)-2,3-dihydroxy-isovalerate. The sequence is that of Ketol-acid reductoisomerase (NADP(+)) from Escherichia fergusonii (strain ATCC 35469 / DSM 13698 / CCUG 18766 / IAM 14443 / JCM 21226 / LMG 7866 / NBRC 102419 / NCTC 12128 / CDC 0568-73).